We begin with the raw amino-acid sequence, 871 residues long: Coatomer subunit gamma-2 (871 aa).

Residues 1 to 11 show a composition bias toward basic and acidic residues; it reads MIKKFDKKDEE. The disordered stretch occupies residues 1–21; that stretch reads MIKKFDKKDEESGSGSNPFQH. HEAT repeat units follow at residues 64 to 101, 283 to 320, 321 to 355, 356 to 392, 395 to 430, and 467 to 504; these read TEAT…ISED, RELA…KHPS, AVTA…GSES, SVDR…KYPR, SVMM…ENPE, and PVPS…QNES. Phosphothreonine is present on threonine 594.

It belongs to the COPG family. In terms of assembly, oligomeric complex. Binds to CDC42. Interacts with JAGN1. Interacts with TMED10 (via cytoplasmic domain).

The protein localises to the cytoplasm. It localises to the cytosol. The protein resides in the golgi apparatus membrane. Its subcellular location is the cytoplasmic vesicle. It is found in the COPI-coated vesicle membrane. In terms of biological role, the coatomer is a cytosolic protein complex that binds to dilysine motifs and reversibly associates with Golgi non-clathrin-coated vesicles, which further mediate biosynthetic protein transport from the ER, via the Golgi up to the trans Golgi network. Coatomer complex is required for budding from Golgi membranes, and is essential for the retrograde Golgi-to-ER transport of dilysine-tagged proteins. In mammals, the coatomer can only be recruited by membranes associated to ADP-ribosylation factors (ARFs), which are small GTP-binding proteins; the complex also influences the Golgi structural integrity, as well as the processing, activity, and endocytic recycling of LDL receptors. This chain is Coatomer subunit gamma-2 (COPG2), found in Homo sapiens (Human).